Reading from the N-terminus, the 423-residue chain is Imidazolonepropionase (423 aa).

The Fe(3+) site is built by His87 and His89. His87 and His89 together coordinate Zn(2+). 4-imidazolone-5-propanoate contacts are provided by Arg96, Tyr159, and His192. Position 159 (Tyr159) interacts with N-formimidoyl-L-glutamate. His257 provides a ligand contact to Fe(3+). His257 is a Zn(2+) binding site. Position 260 (Glu260) interacts with 4-imidazolone-5-propanoate. Asp331 is a Fe(3+) binding site. Asp331 contributes to the Zn(2+) binding site. N-formimidoyl-L-glutamate contacts are provided by Asn333 and Gly335. Ser336 lines the 4-imidazolone-5-propanoate pocket.

Belongs to the metallo-dependent hydrolases superfamily. HutI family. It depends on Zn(2+) as a cofactor. Fe(3+) is required as a cofactor.

Its subcellular location is the cytoplasm. It catalyses the reaction 4-imidazolone-5-propanoate + H2O = N-formimidoyl-L-glutamate. The protein operates within amino-acid degradation; L-histidine degradation into L-glutamate; N-formimidoyl-L-glutamate from L-histidine: step 3/3. In terms of biological role, catalyzes the hydrolytic cleavage of the carbon-nitrogen bond in imidazolone-5-propanoate to yield N-formimidoyl-L-glutamate. It is the third step in the universal histidine degradation pathway. This Porphyromonas gingivalis (strain ATCC BAA-308 / W83) protein is Imidazolonepropionase.